A 322-amino-acid polypeptide reads, in one-letter code: MEAFIIFLISSTSIPLLSNSAFELFNMIPRCSVSWTSLKKLSLRFCELSDECIAKILSGCPILESLTLSHCIYLTVLDLSKSLRLRTLEIACNIDNTRPRQIVAPHIHRLRLKTYQSPCALVDVSSLDEAQVDCFIYSHLKTLDAYLLQDILKMLEKLQNAEKLIFGCNILQILSLAEVCGLPFPMFKTKALTLETDIFQYVIPGIERLLQNSPDLKTVTVRPSDGNIMPGRCFDNYLDLQGLNPNQCWRSKDGVFWNKSRSNLGSKRVTLFVELMLKNTKILDKMVVQLNEHYLRSKLKEFVPTFSQKNNVLIVLSTTLRL.

One can recognise an F-box domain in the interval 45-88; sequence FCELSDECIAKILSGCPILESLTLSHCIYLTVLDLSKSLRLRTL.

The protein is Probable F-box protein At1g60180 of Arabidopsis thaliana (Mouse-ear cress).